We begin with the raw amino-acid sequence, 904 residues long: Eukaryotic translation initiation factor 3 subunit C (904 aa).

2 disordered regions span residues Met1–Asp38 and Phe156–Lys290. The span at Ile22–Phe32 shows a compositional bias: polar residues. Residues Asp161 to Ala183 show a composition bias toward acidic residues. Residues Phe194–Lys206 show a composition bias toward basic and acidic residues. Residues Asp207–Ala232 are compositionally biased toward acidic residues. The span at Ile237–Lys247 shows a compositional bias: basic and acidic residues. Over residues Lys257–Lys272 the composition is skewed to basic residues. The region spanning Phe636–Pro812 is the PCI domain. The interval Arg847–Glu904 is disordered. Positions Tyr860 to Asn873 are enriched in low complexity. The segment covering Arg874 to Glu904 has biased composition (basic and acidic residues).

The protein belongs to the eIF-3 subunit C family. In terms of assembly, component of the eukaryotic translation initiation factor 3 (eIF-3) complex.

Its subcellular location is the cytoplasm. Functionally, component of the eukaryotic translation initiation factor 3 (eIF-3) complex, which is involved in protein synthesis of a specialized repertoire of mRNAs and, together with other initiation factors, stimulates binding of mRNA and methionyl-tRNAi to the 40S ribosome. The eIF-3 complex specifically targets and initiates translation of a subset of mRNAs involved in cell proliferation. The chain is Eukaryotic translation initiation factor 3 subunit C from Culex quinquefasciatus (Southern house mosquito).